The sequence spans 272 residues: Phosphatidylglycerol--prolipoprotein diacylglyceryl transferase (272 aa).

The next 7 membrane-spanning stretches (helical) occupy residues 17–37 (LQVHWYGLMYLLAFLCAWGLA), 55–75 (LVFYGALGVVLGGRIGYVLFY), 90–110 (VWTGGMSFHGGFLGVMIAMLF), 125–145 (FIAPCVPTGLMLGRIGNFIGG), 174–194 (PSQIYQALCEGLLLFIILWWF), 202–222 (MAVSALFLMGYGVARFVMEFF), and 230–250 (GFILFGWMTKGQILTVPMLLI). Arg138 contacts a 1,2-diacyl-sn-glycero-3-phospho-(1'-sn-glycerol).

This sequence belongs to the Lgt family.

The protein localises to the cell inner membrane. The catalysed reaction is L-cysteinyl-[prolipoprotein] + a 1,2-diacyl-sn-glycero-3-phospho-(1'-sn-glycerol) = an S-1,2-diacyl-sn-glyceryl-L-cysteinyl-[prolipoprotein] + sn-glycerol 1-phosphate + H(+). The protein operates within protein modification; lipoprotein biosynthesis (diacylglyceryl transfer). Functionally, catalyzes the transfer of the diacylglyceryl group from phosphatidylglycerol to the sulfhydryl group of the N-terminal cysteine of a prolipoprotein, the first step in the formation of mature lipoproteins. The polypeptide is Phosphatidylglycerol--prolipoprotein diacylglyceryl transferase (Acinetobacter baumannii (strain SDF)).